The following is a 1290-amino-acid chain: Vacuolating cytotoxin autotransporter (1290 aa).

A signal peptide spans 1-33 (MEIQQTHRKINRPLVSLALVGALVSITPQQSHA). The tract at residues 326–374 (PPEGGYKDKPKDKPSNTTQNNANNNQQNSAQNNSNTQVINPPNSAQKTE) is disordered. Basic and acidic residues predominate over residues 330–339 (GYKDKPKDKP). A compositionally biased stretch (low complexity) spans 340-362 (SNTTQNNANNNQQNSAQNNSNTQ). Residues 363–374 (VINPPNSAQKTE) show a composition bias toward polar residues. The region spanning 1018–1290 (KYEKPTNVWA…ASNLGMRYSF (273 aa)) is the Autotransporter domain.

The protein localises to the periplasm. It localises to the secreted. It is found in the cell surface. The protein resides in the cell outer membrane. In terms of biological role, induces vacuolation of eukaryotic cells. Causes ulceration and gastric lesions. In Helicobacter pylori (strain ATCC 700392 / 26695) (Campylobacter pylori), this protein is Vacuolating cytotoxin autotransporter (vacA).